The chain runs to 171 residues: Myelin basic protein (171 aa).

An N-acetylalanine modification is found at A1. S7 and S12 each carry phosphoserine. At Y14 the chain carries Phosphotyrosine. Phosphothreonine is present on T17. S19 carries the post-translational modification Phosphoserine. T20 is subject to Phosphothreonine. 2 positions are modified to citrulline: R25 and R31. T35 bears the Phosphothreonine mark. Phosphoserine is present on S40. Omega-N-methylarginine is present on residues R43 and R49. Residues 44 to 115 (FFGGDRGAPK…GRGLSLSRFS (72 aa)) form a disordered region. S56 is subject to Phosphoserine. Position 69 is a phosphotyrosine (Y69). S76 is modified (phosphoserine). 3 positions are modified to phosphothreonine: T80, T95, and T98. Q103 carries the deamidated glutamine modification. Residue R107 is modified to Omega-N-methylarginine; alternate. At R107 the chain carries Symmetric dimethylarginine; alternate. Phosphoserine is present on S115. A citrulline mark is found at R122 and R130. Residue Q148 is modified to Deamidated glutamine. The residue at position 160 (R160) is a Citrulline. A Phosphoserine modification is found at S162. At S166 the chain carries Phosphoserine; by UHMK1. R171 bears the Citrulline mark.

The protein belongs to the myelin basic protein family. As to quaternary structure, homodimer. In terms of processing, as in other animals, several charge isomers may be produced as a result of optional post-translational modifications, such as phosphorylation of serine or threonine residues, deamidation of glutamine or asparagine residues, citrullination and methylation of arginine residues. Post-translationally, phosphorylated by TAOK2, VRK2, MAPK11, MAPK12, MAPK14 and MINK1. Proteolytically cleaved in B cell lysosomes by cathepsin CTSG which degrades the major immunogenic MBP epitope and prevents the activation of MBP-specific autoreactive T cells.

The protein resides in the myelin membrane. Functionally, is, with PLP, the most abundant protein component of the myelin membrane in the CNS. Has a role in both the formation and stabilization of this compact multilayer arrangement of bilayers. Each splice variant and charge isomer may have a specialized function in the assembly of an optimized, biochemically functional myelin membrane. The sequence is that of Myelin basic protein (MBP) from Pan troglodytes (Chimpanzee).